Here is a 320-residue protein sequence, read N- to C-terminus: Stress-involved WYL domain-containing regulator (320 aa).

In terms of domain architecture, HTH deoR-type spans 7–65; it reads TTGRVVQLLGLLQSRRVWTGEELAERLGVTGRSVRRDIERLRELGYPVHASKGQGGGYQ. The segment at residues 24–43 is a DNA-binding region (H-T-H motif); the sequence is WTGEELAERLGVTGRSVRRD. Positions 139-218 constitute a WYL domain; sequence DTAVAPDVLM…SDVRATGTTF (80 aa). A WCX domain region spans residues 245–320; that stretch reads VRYFAPEKVV…MADRLRRAVR (76 aa).

As to quaternary structure, homodimer.

Transcriptional activator. Acts as a transcriptional activator of the MSMEG_1357-56 operon upon genotoxic stress. Controls adjacent genes that belong to the DinB/YfiT-like putative metalloenzymes superfamily by upregulating their expression in response to various genotoxic stress conditions, including exposure to H(2)O(2) or the natural antibiotic zeocin, as well as mitomycin C (MMC), diamide and UVC radiation. Upon genotoxic stress, upregulates two genes encoding proteins of the DinB/YfiT-like putative metalloenzymes superfamily, MSMEG_1357 and MSMEG_1356. Binds different forms of single-stranded DNA (ssDNA) with high affinity, primarily through its characteristic WYL domain. Binds nucleic acids with single-stranded regions, such as polyT 20mer ssDNA, 5' tailed, 3' tailed and fork DNA, but not ssRNA. The polypeptide is Stress-involved WYL domain-containing regulator (Mycolicibacterium smegmatis (strain ATCC 700084 / mc(2)155) (Mycobacterium smegmatis)).